The primary structure comprises 434 residues: Probable phosphatidylinositol 3,4,5-trisphosphate 3-phosphatase TEP1 (434 aa).

Residues 33 to 255 (KTKNDIGLRL…RYHEFFITHE (223 aa)) form the Phosphatase tensin-type domain. The active-site Phosphocysteine intermediate is cysteine 193.

It carries out the reaction a 1,2-diacyl-sn-glycero-3-phospho-(1D-myo-inositol-3,4,5-trisphosphate) + H2O = a 1,2-diacyl-sn-glycero-3-phospho-(1D-myo-inositol-4,5-bisphosphate) + phosphate. Functionally, may act as a phosphoinositide 3-phosphatase by regulating PtdIns(3,4,5)P3 levels. This is Probable phosphatidylinositol 3,4,5-trisphosphate 3-phosphatase TEP1 (TEP1) from Saccharomyces cerevisiae (strain ATCC 204508 / S288c) (Baker's yeast).